Consider the following 324-residue polypeptide: uncharacterized protein (324 aa).

This is an uncharacterized protein from Borreliella burgdorferi (strain ATCC 35210 / DSM 4680 / CIP 102532 / B31) (Borrelia burgdorferi).